We begin with the raw amino-acid sequence, 570 residues long: MITPALRHSGTLSFAIKLTVASTLLTFASLSAHAEEQPASPPQPPDILLGPLFNDVQSVKLFPDQKTFADAVPNSDPLMILADYRMQRNQSGFDLRHFVDVNFTLPKEGEKYVPPEGQSLREHIDGLWPVLTRTTESAGKWDSLLPLPEPYVVPGGRFREVYYWDSYFTMLGLAESDHWDKVADMVANFGYELDSWGHIPNGNRTYYLSRSQPPFFAFMVELLAQHEGDDALKKYLPQLQKEYAYWMEGVENLQPGEQNKRVVKLDDGTVLNRYWDDRDTPRPESWMEDITTAKSNPNRPATEIYRDLRSAAASGWDFSSRWMDDPNQLSTIRTTSIVPVDLNALLYKLEKMLARASKAAGDDANANQYEALASARQKGIETHLWNNQEGWYADYDLKSKKVRNQLTAATLFPLYVNAAAKDRASKVAAATQAHLLQPGGLSTTSVKSGQQWDAPNGWAPLQWVATEGLQNYGQDNVAMDVTWRFLTNVQHTYDREQKLVEKYDVSSTGTGGGGGEYPLQDGFGWTNGVTLKMLDLICPKEKPCDSVPATRPAAPGASQPAPQKQVETTP.

A signal peptide spans 1–34; the sequence is MITPALRHSGTLSFAIKLTVASTLLTFASLSAHA. Substrate-binding positions include Arg157, 164–165, Asn201, 210–212, 282–284, and Gly315; these read WD, RSQ, and RPE. Catalysis depends on proton donor/acceptor residues Asp317 and Glu501. Glu516 serves as a coordination point for substrate. The segment at 542 to 570 is disordered; sequence KPCDSVPATRPAAPGASQPAPQKQVETTP. The span at 552-570 shows a compositional bias: low complexity; it reads PAAPGASQPAPQKQVETTP.

Belongs to the glycosyl hydrolase 37 family. As to quaternary structure, monomer.

It is found in the periplasm. It carries out the reaction alpha,alpha-trehalose + H2O = alpha-D-glucose + beta-D-glucose. In terms of biological role, provides the cells with the ability to utilize trehalose at high osmolarity by splitting it into glucose molecules that can subsequently be taken up by the phosphotransferase-mediated uptake system. The chain is Periplasmic trehalase from Citrobacter koseri (strain ATCC BAA-895 / CDC 4225-83 / SGSC4696).